Reading from the N-terminus, the 194-residue chain is MRLCDTDIERYLDEGIIEIIPRPSNEKITGATVDVRLGNSFRVFREHATPYIDLSGPREEVTAQLHKVMSEEIIIADGEAFFLHPGELALATTLESVTLPDNVVGWLDGRSSLARLGLMVHVTAHRIDPGWQGKIVLEFFNAGKLPLALRPNMAIGALSFEILSGHAAKPYNARKDAKYKNQQSAVSSRINQDD.

DCTP-binding positions include 110-115, D128, 136-138, Y171, K178, and Q182; these read RSSLAR and VLE. E138 serves as the catalytic Proton donor/acceptor. A disordered region spans residues 175-194; that stretch reads KDAKYKNQQSAVSSRINQDD. The span at 180 to 194 shows a compositional bias: polar residues; the sequence is KNQQSAVSSRINQDD.

It belongs to the dCTP deaminase family. As to quaternary structure, homotrimer.

The catalysed reaction is dCTP + H2O + H(+) = dUTP + NH4(+). It functions in the pathway pyrimidine metabolism; dUMP biosynthesis; dUMP from dCTP (dUTP route): step 1/2. Functionally, catalyzes the deamination of dCTP to dUTP. The polypeptide is dCTP deaminase (Actinobacillus pleuropneumoniae serotype 5b (strain L20)).